Here is a 356-residue protein sequence, read N- to C-terminus: Delta(7)-sterol 5(6)-desaturase (356 aa).

3 helical membrane-spanning segments follow: residues 87-107 (LTLY…FAGL), 134-154 (QANI…LAEV), and 171-191 (WYDY…IYWI). Positions 179–303 (FFIAFTDLCI…FTTLWDRLGG (125 aa)) constitute a Fatty acid hydroxylase domain. Residues 192 to 196 (HRGLH) carry the Histidine box-1 motif. Positions 205–209 (HKPHH) match the Histidine box-2 motif. A helical transmembrane segment spans residues 235–255 (YIFPFLFPLSKIASVAFFVFV). Positions 280–284 (HTMHH) match the Histidine box-3 motif.

Belongs to the sterol desaturase family. It depends on Fe cation as a cofactor.

It is found in the endoplasmic reticulum membrane. It catalyses the reaction a Delta(7)-sterol + 2 Fe(II)-[cytochrome b5] + O2 + 2 H(+) = a Delta(5),Delta(7)-sterol + 2 Fe(III)-[cytochrome b5] + 2 H2O. It participates in steroid metabolism; ergosterol biosynthesis; ergosterol from zymosterol: step 3/5. In terms of biological role, catalyzes the introduction of a C-5 double bond in the B ring of ergosterol. May contribute to the regulation of ergosterol biosynthesis. The chain is Delta(7)-sterol 5(6)-desaturase (ERG3) from Leptosphaeria maculans (Blackleg fungus).